The following is a 482-amino-acid chain: G patch domain-containing protein 2-like (482 aa).

A phosphoserine mark is found at serine 31, serine 86, and serine 88. Residue threonine 91 is modified to Phosphothreonine. A Glycyl lysine isopeptide (Lys-Gly) (interchain with G-Cter in SUMO2) cross-link involves residue lysine 196. Over residues 198–214 (GRKERMECETDEQKQGS) the composition is skewed to basic and acidic residues. Disordered stretches follow at residues 198–247 (GRKE…DDEQ) and 413–482 (KRKR…PGYS). Residues 220 to 230 (ECETSSVCSSS) are compositionally biased toward low complexity. Over residues 439–450 (TPASQAPKSPSS) the composition is skewed to polar residues. Phosphoserine occurs at positions 447 and 449. Residues 456-469 (TSAAEKATDATTAT) are compositionally biased toward low complexity.

The protein is G patch domain-containing protein 2-like (GPATCH2L) of Homo sapiens (Human).